Here is a 490-residue protein sequence, read N- to C-terminus: Lysine--tRNA ligase (490 aa).

Mg(2+) is bound by residues Glu-400 and Glu-407.

This sequence belongs to the class-II aminoacyl-tRNA synthetase family. In terms of assembly, homodimer. The cofactor is Mg(2+).

The protein resides in the cytoplasm. It catalyses the reaction tRNA(Lys) + L-lysine + ATP = L-lysyl-tRNA(Lys) + AMP + diphosphate. This chain is Lysine--tRNA ligase (lysS), found in Mycoplasma genitalium (strain ATCC 33530 / DSM 19775 / NCTC 10195 / G37) (Mycoplasmoides genitalium).